The following is a 689-amino-acid chain: Methionine--tRNA ligase (689 aa).

Positions 15–25 (PYANGPIHLGH) match the 'HIGH' region motif. Zn(2+) is bound by residues Cys146, Cys149, Cys159, and Cys162. Positions 332–336 (KMSKS) match the 'KMSKS' region motif. Lys335 is an ATP binding site. Residues 588 to 689 (DFAKIDLRIA…EGAQPGMRVK (102 aa)) enclose the tRNA-binding domain.

Belongs to the class-I aminoacyl-tRNA synthetase family. MetG type 1 subfamily. In terms of assembly, homodimer. It depends on Zn(2+) as a cofactor.

Its subcellular location is the cytoplasm. The enzyme catalyses tRNA(Met) + L-methionine + ATP = L-methionyl-tRNA(Met) + AMP + diphosphate. In terms of biological role, is required not only for elongation of protein synthesis but also for the initiation of all mRNA translation through initiator tRNA(fMet) aminoacylation. The protein is Methionine--tRNA ligase of Shewanella baltica (strain OS155 / ATCC BAA-1091).